Reading from the N-terminus, the 1020-residue chain is Protein translocase subunit SecA (1020 aa).

ATP is bound by residues Gln-99, 117–121, and Asp-633; that span reads GEGKT. The disordered stretch occupies residues 963 to 992; it reads NEQPSQEMAADEETQEESKIEENKPEPIVV. Basic and acidic residues predominate over residues 978-987; that stretch reads EESKIEENKP. Residues Cys-1002, Cys-1004, Cys-1013, and Cys-1014 each coordinate Zn(2+).

It belongs to the SecA family. As to quaternary structure, monomer and homodimer. Part of the essential Sec protein translocation apparatus which comprises SecA, SecYEG and auxiliary proteins SecDF. Other proteins may also be involved. It depends on Zn(2+) as a cofactor.

Its subcellular location is the cell inner membrane. It localises to the cytoplasm. The catalysed reaction is ATP + H2O + cellular proteinSide 1 = ADP + phosphate + cellular proteinSide 2.. Part of the Sec protein translocase complex. Interacts with the SecYEG preprotein conducting channel. Has a central role in coupling the hydrolysis of ATP to the transfer of proteins into and across the cell membrane, serving as an ATP-driven molecular motor driving the stepwise translocation of polypeptide chains across the membrane. The chain is Protein translocase subunit SecA from Protochlamydia amoebophila (strain UWE25).